Reading from the N-terminus, the 111-residue chain is Short neuropeptide F (111 aa).

A signal peptide spans 1-24 (MSAMYAKRCAALVLLVVTVGLVNA). A propeptide spanning residues 25 to 76 (TENYMDYGEEMAEKTPAENIHELYRLLLQRNTLDNAGFGGIPLEHLMIRKSQ) is cleaved from the precursor. Residue phenylalanine 85 is modified to Phenylalanine amide. Residues 88-111 (SGPHVSARALPRPMGAVAGYDDNN) constitute a propeptide that is removed on maturation.

As to expression, expressed throughout the central nervous system (at protein level).

The protein resides in the secreted. Plays a role in controlling food intake and regulating body size. The sequence is that of Short neuropeptide F from Camponotus floridanus (Florida carpenter ant).